Consider the following 363-residue polypeptide: DNA replication and repair protein RecF (363 aa).

31–38 is a binding site for ATP; that stretch reads GANSSGKT.

The protein belongs to the RecF family.

It is found in the cytoplasm. Functionally, the RecF protein is involved in DNA metabolism; it is required for DNA replication and normal SOS inducibility. RecF binds preferentially to single-stranded, linear DNA. It also seems to bind ATP. This chain is DNA replication and repair protein RecF, found in Nitrosococcus oceani (strain ATCC 19707 / BCRC 17464 / JCM 30415 / NCIMB 11848 / C-107).